A 75-amino-acid polypeptide reads, in one-letter code: Small ribosomal subunit protein bS18 (75 aa).

This sequence belongs to the bacterial ribosomal protein bS18 family. In terms of assembly, part of the 30S ribosomal subunit. Forms a tight heterodimer with protein bS6.

Binds as a heterodimer with protein bS6 to the central domain of the 16S rRNA, where it helps stabilize the platform of the 30S subunit. This chain is Small ribosomal subunit protein bS18, found in Photobacterium profundum (strain SS9).